The sequence spans 56 residues: Large ribosomal subunit protein bL33 (56 aa).

It belongs to the bacterial ribosomal protein bL33 family.

This Orientia tsutsugamushi (strain Ikeda) (Rickettsia tsutsugamushi) protein is Large ribosomal subunit protein bL33.